The sequence spans 158 residues: Ribosome maturation factor RimP (158 aa).

This sequence belongs to the RimP family.

The protein resides in the cytoplasm. Its function is as follows. Required for maturation of 30S ribosomal subunits. The chain is Ribosome maturation factor RimP from Pseudomonas putida (strain ATCC 47054 / DSM 6125 / CFBP 8728 / NCIMB 11950 / KT2440).